Reading from the N-terminus, the 136-residue chain is MFIPKKTKYKKDFKGRISGNAKGGYTLSFGSYGLKALEPCRLTSKQIESARRSISRTLKRVGKVWIRAFCHTSVSKKPMDVRMGKGKGSVEMWVCKVKPGKILFEISGVSLNLAREALNKAQAKLPMKCKFVSDEL.

It belongs to the universal ribosomal protein uL16 family. Part of the 50S ribosomal subunit.

Functionally, binds 23S rRNA and is also seen to make contacts with the A and possibly P site tRNAs. The chain is Large ribosomal subunit protein uL16 from Ehrlichia canis (strain Jake).